Here is a 279-residue protein sequence, read N- to C-terminus: Oxygen-dependent coproporphyrinogen-III oxidase (279 aa).

Substrate is bound at residue Ser102. A divalent metal cation contacts are provided by His106 and His116. His116 acts as the Proton donor in catalysis. 118–120 (NTR) contributes to the substrate binding site. A divalent metal cation-binding residues include His149 and His179. Residues 244–279 (YVEFNLLYDRGTKFGLMTDGNVEAILMSLPPEVKWA) are important for dimerization.

This sequence belongs to the aerobic coproporphyrinogen-III oxidase family. Homodimer. A divalent metal cation is required as a cofactor.

The protein resides in the cytoplasm. The enzyme catalyses coproporphyrinogen III + O2 + 2 H(+) = protoporphyrinogen IX + 2 CO2 + 2 H2O. It functions in the pathway porphyrin-containing compound metabolism; protoporphyrin-IX biosynthesis; protoporphyrinogen-IX from coproporphyrinogen-III (O2 route): step 1/1. In terms of biological role, involved in the heme biosynthesis. Catalyzes the aerobic oxidative decarboxylation of propionate groups of rings A and B of coproporphyrinogen-III to yield the vinyl groups in protoporphyrinogen-IX. The protein is Oxygen-dependent coproporphyrinogen-III oxidase of Rickettsia bellii (strain RML369-C).